The primary structure comprises 270 residues: MSGQVRVAIVGAGGRMGRTLIEAAYNHDHILLGAAIERAGSSLVGVDAGELAGVGKLKVMIMDSLDYATDDFDVLIDFTAPDASIVHLDWCVRHKKAMVIGTTGFNHAQKEQINAFAEQTPVVMAPNMSVGVNLMWKLLELAAEVMGDYTDIEIIEGHHRHKKDAPSGTALKMGEVIAKTLGRDLEKCAVYGREGITGERDRETIGFATIRAGDLVGEHTAMFADIGERLEITHKASSRMTFANGAMRAAHWLVEQKPGLYDMQQVLGLH.

NAD(+) contacts are provided by residues 11–16 (GAGGRM) and glutamate 37. Arginine 38 provides a ligand contact to NADP(+). NAD(+)-binding positions include 101 to 103 (GTT) and 125 to 128 (APNM). Histidine 158 serves as the catalytic Proton donor/acceptor. Histidine 159 is a (S)-2,3,4,5-tetrahydrodipicolinate binding site. Lysine 162 serves as the catalytic Proton donor. A (S)-2,3,4,5-tetrahydrodipicolinate-binding site is contributed by 168 to 169 (GT).

The protein belongs to the DapB family.

The protein localises to the cytoplasm. The enzyme catalyses (S)-2,3,4,5-tetrahydrodipicolinate + NAD(+) + H2O = (2S,4S)-4-hydroxy-2,3,4,5-tetrahydrodipicolinate + NADH + H(+). The catalysed reaction is (S)-2,3,4,5-tetrahydrodipicolinate + NADP(+) + H2O = (2S,4S)-4-hydroxy-2,3,4,5-tetrahydrodipicolinate + NADPH + H(+). It functions in the pathway amino-acid biosynthesis; L-lysine biosynthesis via DAP pathway; (S)-tetrahydrodipicolinate from L-aspartate: step 4/4. Its function is as follows. Catalyzes the conversion of 4-hydroxy-tetrahydrodipicolinate (HTPA) to tetrahydrodipicolinate. In Shewanella baltica (strain OS223), this protein is 4-hydroxy-tetrahydrodipicolinate reductase.